The following is a 328-amino-acid chain: Stress response kinase A (328 aa).

Aspartate 201 acts as the Proton acceptor in catalysis. Positions 206 and 217 each coordinate Mg(2+). The active site involves aspartate 217.

It belongs to the SrkA/RdoA protein kinase family. In terms of assembly, monomer. Requires Mg(2+) as cofactor.

Its subcellular location is the cytoplasm. It catalyses the reaction L-seryl-[protein] + ATP = O-phospho-L-seryl-[protein] + ADP + H(+). The enzyme catalyses L-threonyl-[protein] + ATP = O-phospho-L-threonyl-[protein] + ADP + H(+). Functionally, a protein kinase that phosphorylates Ser and Thr residues. Probably acts to suppress the effects of stress linked to accumulation of reactive oxygen species. Probably involved in the extracytoplasmic stress response. The sequence is that of Stress response kinase A from Salmonella paratyphi A (strain ATCC 9150 / SARB42).